The following is a 206-amino-acid chain: GDT1-like protein sll0615 (206 aa).

A run of 5 helical transmembrane segments spans residues 36–56, 58–78, 114–134, 151–171, and 185–205; these read WVLV…VLMG, IFTF…FLIF, IVPR…VAEW, AWGV…IAVM, and VTLI…WTKI.

This sequence belongs to the GDT1 family.

The protein localises to the cell membrane. The sequence is that of GDT1-like protein sll0615 from Synechocystis sp. (strain ATCC 27184 / PCC 6803 / Kazusa).